The sequence spans 44 residues: Phosphatase RapA inhibitor (44 aa).

The propeptide occupies 1-39; the sequence is MKSKWMSGLLLVAVGFSFTQVMVHAGETANTEGKTFHIA.

It belongs to the Phr family. Interacts with RapA and inhibits its interaction with Spo0F. Secreted with a propeptide domain, which is cleaved in the cell wall by the secreted serine proteases subtilisin and Vpr to produce a mature signaling peptide. Contains a predicted signal peptide cleavage site in the N-terminal region, however the propeptide is probably subject to only one processing event, at the N-terminal end of the mature peptide.

Its subcellular location is the secreted. The protein resides in the cytoplasm. Its activity is regulated as follows. Inhibition of RapA requires a free carboxylate group at the C-terminal end of the PhrA pentapeptide. A free C-terminal carboxylic acid PhrA pentapeptide inhibits RapA phosphatase activity at a 1:1 ratio and is approximately 200 fold more active than a C-terminal amide peptide. Its function is as follows. Signaling molecule involved in the regulation of sporulation. Secreted during production, but the mature peptide acts intracellularly, indicating that it needs to be imported into the cell to function. Inhibitor of the RapA phosphatase activity. Does not act on RapB. This chain is Phosphatase RapA inhibitor, found in Bacillus subtilis (strain 168).